The following is a 457-amino-acid chain: UDP-glucosyltransferase 45 (457 aa).

H21 serves as the catalytic Proton acceptor. H21 is a binding site for an anthocyanidin. D112 acts as the Charge relay in catalysis. T134, Q336, H351, W354, N355, S356, E359, D375, and Q376 together coordinate UDP-alpha-D-glucose.

The protein belongs to the UDP-glycosyltransferase family.

It catalyses the reaction (20S)-protopanaxadiol + UDP-alpha-D-glucose = (20S)-ginsenoside Rh2 + UDP + H(+). It functions in the pathway secondary metabolite biosynthesis; terpenoid biosynthesis. Its function is as follows. Component of the triterpene saponins (e.g. PPD-type ginsenosides) biosynthetic pathway. Glycosyltransferase that catalyzes the biosynthesis of ginsenoside Rh2 from protopanaxadiol (PPD). This chain is UDP-glucosyltransferase 45, found in Panax ginseng (Korean ginseng).